The chain runs to 357 residues: MLPNQERKLRVLVVDDSSFMRMVIRSVLEKDPAIEVIAVAMDGVEGVEKALALRPDLITMDIEMPRLDGISALKEIMAKAPTRVLMVSTLTCEGAKATFDALDAGAIDYIPKNVTDSIDAQKAFKEELLRKVKGSGISILGRPLVSPSPRLVVPPRPVIIPRPAGQRYQYVGIGASTGGPVAVQEVLGRIPGNFPHGIVVAIHMPKAFTGPYAERLNTKCSLQVKEAKAGDIVQPGVVLVTPGGMHTALVRQGSTVAIRTIATAEYPQYIYIPSVDHMLTTFADACNGSLLGVILTGMGADGFKGMKHLKTKGGGTIVQDEATSTIYGMPRACIEGGVADTVLPLTQIGTEITKIAG.

The Response regulatory domain maps to 10 to 127; sequence RVLVVDDSSF…IDAQKAFKEE (118 aa). 4-aspartylphosphate is present on aspartate 61. The region spanning 161–357 is the CheB-type methylesterase domain; the sequence is PRPAGQRYQY…IGTEITKIAG (197 aa). Active-site residues include serine 176, histidine 203, and aspartate 301.

This sequence belongs to the CheB family. Phosphorylated by CheA. Phosphorylation of the N-terminal regulatory domain activates the methylesterase activity.

Its subcellular location is the cytoplasm. It catalyses the reaction [protein]-L-glutamate 5-O-methyl ester + H2O = L-glutamyl-[protein] + methanol + H(+). It carries out the reaction L-glutaminyl-[protein] + H2O = L-glutamyl-[protein] + NH4(+). In terms of biological role, involved in chemotaxis. Part of a chemotaxis signal transduction system that modulates chemotaxis in response to various stimuli. Catalyzes the demethylation of specific methylglutamate residues introduced into the chemoreceptors (methyl-accepting chemotaxis proteins or MCP) by CheR. Also mediates the irreversible deamidation of specific glutamine residues to glutamic acid. The protein is Protein-glutamate methylesterase/protein-glutamine glutaminase 5 of Geobacter metallireducens (strain ATCC 53774 / DSM 7210 / GS-15).